We begin with the raw amino-acid sequence, 417 residues long: D-glycerate 2-kinase (417 aa).

It belongs to the glycerate kinase type-1 family. In terms of assembly, homodimer. Mg(2+) is required as a cofactor.

The catalysed reaction is (R)-glycerate + ATP = (2R)-2-phosphoglycerate + ADP + H(+). In terms of biological role, involved in the degradation of serine via 3-hydroxypyruvate. Catalyzes the ATP-dependent phosphorylation of D-glycerate to 2-phosphoglycerate. The protein is D-glycerate 2-kinase of Thermotoga maritima (strain ATCC 43589 / DSM 3109 / JCM 10099 / NBRC 100826 / MSB8).